The sequence spans 280 residues: Homeobox protein SMOX-1 (280 aa).

The tract at residues 61–88 (PNNNSFQLNTTNDSNNNNTTNNGNDSRS) is disordered. Over residues 69–85 (NTTNDSNNNNTTNNGND) the composition is skewed to low complexity. The Antp-type hexapeptide signature appears at 214–219 (VYPWMN). Positions 229–280 (QKRTRQTYTRYQTLELEKEFHFNKYLTRRRRIEIAHTLTLTERQIKIWFQNR) form a DNA-binding region, homeobox.

It belongs to the Antp homeobox family.

It localises to the nucleus. The chain is Homeobox protein SMOX-1 (SMOX-1) from Schistosoma mansoni (Blood fluke).